Reading from the N-terminus, the 392-residue chain is GDSL esterase/lipase ESM1 (392 aa).

The first 28 residues, 1–28 (MADNLNLVSVLGVLLVLTIFHNPIIVYA), serve as a signal peptide directing secretion. Catalysis depends on Ser-43, which acts as the Nucleophile. 3 N-linked (GlcNAc...) asparagine glycosylation sites follow: Asn-146, Asn-166, and Asn-290. Residues Asp-324 and His-327 contribute to the active site.

This sequence belongs to the 'GDSL' lipolytic enzyme family.

The protein localises to the secreted. Represses or inhibits nitriles production from methionine-derived and from indol-3-ylmethyl glucosinolates. Favors isothiocyanate production. This chain is GDSL esterase/lipase ESM1 (ESM1), found in Arabidopsis thaliana (Mouse-ear cress).